Reading from the N-terminus, the 222-residue chain is Tetratricopeptide repeat protein 9A (222 aa).

2 disordered regions span residues 1-49 (MERK…AAAE) and 88-116 (KGLL…GRLS). One copy of the TPR 1 repeat lies at 56–89 (RAHEFKSQGAQCYKDKKFREAIGKYHRALLELKG). Ser105 bears the Phosphoserine mark. TPR repeat units lie at residues 125–160 (AIEI…LKKE) and 161–194 (GENF…RTQQ).

This sequence belongs to the TTC9 family.

This chain is Tetratricopeptide repeat protein 9A (TTC9), found in Homo sapiens (Human).